A 403-amino-acid chain; its full sequence is Na(+)-translocating NADH-quinone reductase subunit B (403 aa).

3 consecutive transmembrane segments (helical) span residues 56-76 (IMIMVWAATFPAMFYGMYNIG), 114-134 (LAMFLYGACFFLPIYAVTFIV), and 165-185 (LPATIPLWQVALGITFGVVIA). Position 231 is an FMN phosphoryl threonine (T231). Helical transmembrane passes span 260-280 (GSVGEVSSLAILLGGLFIIYM), 287-307 (IVLGVLLGGAVFSTLLNVIGS), 312-332 (MFAMPWYWHVVTGGFAFGMFF), 348-368 (WAYGFLIGLMCVLIRVLNPAF), and 371-391 (GMMLAILFANLWAPLFDYFVA).

The protein belongs to the NqrB/RnfD family. In terms of assembly, composed of six subunits; NqrA, NqrB, NqrC, NqrD, NqrE and NqrF. It depends on FMN as a cofactor.

It localises to the cell inner membrane. The catalysed reaction is a ubiquinone + n Na(+)(in) + NADH + H(+) = a ubiquinol + n Na(+)(out) + NAD(+). In terms of biological role, NQR complex catalyzes the reduction of ubiquinone-1 to ubiquinol by two successive reactions, coupled with the transport of Na(+) ions from the cytoplasm to the periplasm. NqrA to NqrE are probably involved in the second step, the conversion of ubisemiquinone to ubiquinol. The sequence is that of Na(+)-translocating NADH-quinone reductase subunit B from Pseudoalteromonas atlantica (strain T6c / ATCC BAA-1087).